Here is a 293-residue protein sequence, read N- to C-terminus: MNEQELKQMIEGILTEMSGGKTTDTVAAAPTKSVVETVVTEGSIPDITEVDIKKQLLVPEPADREGYLKMKQMTPARLGLWRAGPRYKTETILRFRADHAVAQDSVFSYVSEDLVKEMNFIPVNTKCQDKDEYLTRPDLGREFDNEMVEVIRANTTKNAKLQIVVGDGLSSAAIEANIKDILPSIKQGLKMYNLDFDNIIFVKHCRVPSMDQIGEITGADVVCLLVGERPGLVTAESMSAYIAYKPTIGMPEARRTVISNIHSGGTPPVEAGAYIAELIHNMLEKKCSGIDLK.

Adenosylcob(III)alamin-binding residues include V207 and E228.

The protein belongs to the EutC family. The basic unit is a heterodimer which dimerizes to form tetramers. The heterotetramers trimerize; 6 large subunits form a core ring with 6 small subunits projecting outwards. The cofactor is adenosylcob(III)alamin.

It is found in the bacterial microcompartment. It carries out the reaction ethanolamine = acetaldehyde + NH4(+). It participates in amine and polyamine degradation; ethanolamine degradation. In terms of biological role, catalyzes the deamination of various vicinal amino-alcohols to oxo compounds. Allows this organism to utilize ethanolamine as the sole source of nitrogen and carbon in the presence of external vitamin B12. This Listeria monocytogenes serotype 4a (strain HCC23) protein is Ethanolamine ammonia-lyase small subunit.